Consider the following 439-residue polypeptide: tRNA-2-methylthio-N(6)-dimethylallyladenosine synthase (439 aa).

The region spanning 2 to 115 (KGLYIKTYGC…LPELIVKASR (114 aa)) is the MTTase N-terminal domain. Residues cysteine 11, cysteine 47, cysteine 78, cysteine 155, cysteine 159, and cysteine 162 each coordinate [4Fe-4S] cluster. The 232-residue stretch at 141-372 (NSQGSSAFLA…QKLISKQQLE (232 aa)) folds into the Radical SAM core domain. The TRAM domain occupies 375–439 (QSMVGKTIPV…QSSLLGCAFH (65 aa)).

This sequence belongs to the methylthiotransferase family. MiaB subfamily. In terms of assembly, monomer. The cofactor is [4Fe-4S] cluster.

It is found in the cytoplasm. The enzyme catalyses N(6)-dimethylallyladenosine(37) in tRNA + (sulfur carrier)-SH + AH2 + 2 S-adenosyl-L-methionine = 2-methylsulfanyl-N(6)-dimethylallyladenosine(37) in tRNA + (sulfur carrier)-H + 5'-deoxyadenosine + L-methionine + A + S-adenosyl-L-homocysteine + 2 H(+). Catalyzes the methylthiolation of N6-(dimethylallyl)adenosine (i(6)A), leading to the formation of 2-methylthio-N6-(dimethylallyl)adenosine (ms(2)i(6)A) at position 37 in tRNAs that read codons beginning with uridine. The sequence is that of tRNA-2-methylthio-N(6)-dimethylallyladenosine synthase from Wolbachia pipientis wMel.